Reading from the N-terminus, the 499-residue chain is Ribose import ATP-binding protein RbsA 1 (499 aa).

ABC transporter domains lie at 5-240 (LEMR…GRSI) and 249-494 (TEPG…TAGS). Residue 37-44 (GENGAGKS) participates in ATP binding.

It belongs to the ABC transporter superfamily. Ribose importer (TC 3.A.1.2.1) family. As to quaternary structure, the complex is composed of an ATP-binding protein (RbsA), two transmembrane proteins (RbsC) and a solute-binding protein (RbsB).

The protein resides in the cell membrane. The catalysed reaction is D-ribose(out) + ATP + H2O = D-ribose(in) + ADP + phosphate + H(+). Part of the ABC transporter complex RbsABC involved in ribose import. Responsible for energy coupling to the transport system. The protein is Ribose import ATP-binding protein RbsA 1 of Rubrobacter xylanophilus (strain DSM 9941 / JCM 11954 / NBRC 16129 / PRD-1).